We begin with the raw amino-acid sequence, 569 residues long: Urease subunit alpha (569 aa).

The Urease domain occupies 131 to 569 (GSIDTHIHFI…VPMAQRYFLL (439 aa)). Residues His136, His138, and Lys219 each contribute to the Ni(2+) site. Residue Lys219 is modified to N6-carboxylysine. His221 is a binding site for substrate. 2 residues coordinate Ni(2+): His248 and His274. His322 functions as the Proton donor in the catalytic mechanism. Asp362 provides a ligand contact to Ni(2+).

This sequence belongs to the metallo-dependent hydrolases superfamily. Urease alpha subunit family. In terms of assembly, heterotrimer of UreA (gamma), UreB (beta) and UreC (alpha) subunits. Three heterotrimers associate to form the active enzyme. Ni cation serves as cofactor. Carboxylation allows a single lysine to coordinate two nickel ions.

Its subcellular location is the cytoplasm. The catalysed reaction is urea + 2 H2O + H(+) = hydrogencarbonate + 2 NH4(+). The protein operates within nitrogen metabolism; urea degradation; CO(2) and NH(3) from urea (urease route): step 1/1. This Prochlorococcus marinus (strain MIT 9301) protein is Urease subunit alpha.